Consider the following 99-residue polypeptide: Large ribosomal subunit protein eL36 (99 aa).

Belongs to the eukaryotic ribosomal protein eL36 family. Component of the large ribosomal subunit. Mature ribosomes consist of a small (40S) and a large (60S) subunit. The 40S subunit contains about 32 different proteins and 1 molecule of RNA (18S). The 60S subunit contains 45 different proteins and 3 molecules of RNA (25S, 5.8S and 5S).

Its subcellular location is the cytoplasm. Its function is as follows. Component of the ribosome, a large ribonucleoprotein complex responsible for the synthesis of proteins in the cell. The small ribosomal subunit (SSU) binds messenger RNAs (mRNAs) and translates the encoded message by selecting cognate aminoacyl-transfer RNA (tRNA) molecules. The large subunit (LSU) contains the ribosomal catalytic site termed the peptidyl transferase center (PTC), which catalyzes the formation of peptide bonds, thereby polymerizing the amino acids delivered by tRNAs into a polypeptide chain. The nascent polypeptides leave the ribosome through a tunnel in the LSU and interact with protein factors that function in enzymatic processing, targeting, and the membrane insertion of nascent chains at the exit of the ribosomal tunnel. This is Large ribosomal subunit protein eL36 from Candida albicans (strain SC5314 / ATCC MYA-2876) (Yeast).